We begin with the raw amino-acid sequence, 421 residues long: 5-methylthioadenosine/S-adenosylhomocysteine deaminase (421 aa).

The Zn(2+) site is built by H60 and H62. E89 and H181 together coordinate substrate. Residue H208 coordinates Zn(2+). Residues E211 and D296 each coordinate substrate. A Zn(2+)-binding site is contributed by D296.

The protein belongs to the metallo-dependent hydrolases superfamily. MTA/SAH deaminase family. Zn(2+) is required as a cofactor.

It catalyses the reaction S-adenosyl-L-homocysteine + H2O + H(+) = S-inosyl-L-homocysteine + NH4(+). It carries out the reaction S-methyl-5'-thioadenosine + H2O + H(+) = S-methyl-5'-thioinosine + NH4(+). Its function is as follows. Catalyzes the deamination of 5-methylthioadenosine and S-adenosyl-L-homocysteine into 5-methylthioinosine and S-inosyl-L-homocysteine, respectively. Is also able to deaminate adenosine. The chain is 5-methylthioadenosine/S-adenosylhomocysteine deaminase from Pyrococcus horikoshii (strain ATCC 700860 / DSM 12428 / JCM 9974 / NBRC 100139 / OT-3).